Reading from the N-terminus, the 187-residue chain is Ion-translocating oxidoreductase complex subunit B (187 aa).

Positions 1–26 (MTHILFAVLVLALLALAFGIILGFAA) are hydrophobic. The 59-residue stretch at 32–90 (EADPIVDQLDALLPQTQCGQCGYPGCKPYAEALANGDQINKCVPGGDATMRKIADLMGV) folds into the 4Fe-4S domain. [4Fe-4S] cluster contacts are provided by Cys-49, Cys-52, Cys-57, Cys-73, Cys-115, Cys-118, Cys-121, Cys-125, Cys-145, Cys-148, Cys-151, and Cys-155. 4Fe-4S ferredoxin-type domains are found at residues 106–135 (KVAF…GATK) and 136–165 (AMHT…MIPV).

The protein belongs to the 4Fe4S bacterial-type ferredoxin family. RnfB subfamily. The complex is composed of six subunits: RnfA, RnfB, RnfC, RnfD, RnfE and RnfG. [4Fe-4S] cluster is required as a cofactor.

It localises to the cell inner membrane. In terms of biological role, part of a membrane-bound complex that couples electron transfer with translocation of ions across the membrane. This chain is Ion-translocating oxidoreductase complex subunit B, found in Aeromonas hydrophila subsp. hydrophila (strain ATCC 7966 / DSM 30187 / BCRC 13018 / CCUG 14551 / JCM 1027 / KCTC 2358 / NCIMB 9240 / NCTC 8049).